Consider the following 526-residue polypeptide: MGKIIKSLSRFGKKVGNALTSNTAKKIYNTIGKAAERFAESEIGSAAIDGLVQGSVHSIITGESYGESVKQAVLLNVLGAGDEIPDPLSPGERGIQTKIKEIEEEQRNELVRIKYGKEIREKFGEQLEEIYQFMNGEVKGEEEQEEQYKVLCKAVDSYENLLVTENEQMRTLARALQREATERTENESKMVKEYRQKIDALKVAIEVERDGMQEEAIQEIAGMTADVLEAASEEVPLVGSGMATAIATGRAIEGAYKLKKVINALSGIDLSHLRTPKIEPTMVATTLEHRFKEIPDKELAVSVLAKNDAIVANTKEIKHIKEEILPKFKKIMEEEKELEGIDDKKIHPRVMMRFKVPRSQQPQIHIYSAPWDSDDVFFFHCVSHFHANESFFLGFDLGIDVVHFEDLAAHWHALGAAQEAKGRTLNEAYREFLNLSIGSAFTSPMHARRMIRSKTVHPIYLGSMHYDITYETLKTNATEARYDEDLQMHILRGPLHFQRRAILGALKFGVKVLGDKVDVPLFLKNA.

The interval 1-42 is involved in membrane permeabilization; it reads MGKIIKSLSRFGKKVGNALTSNTAKKIYNTIGKAAERFAESE.

It belongs to the orbivirus VP5 family.

It localises to the virion. VP5 protein is one of the two proteins (with VP2) which constitute the virus particle outer capsid. Acts as a membrane permeabilization protein that mediates release of viral particles from endosomal compartments into the cytoplasm. Permeabilization activity is probably negatively regulated by VP2 and is triggered by endosomal degradation of VP2 and exposure to low pH. The chain is Outer capsid protein VP5 (Segment-6) from Bluetongue virus 13 (isolate USA) (BTV 13).